We begin with the raw amino-acid sequence, 285 residues long: Probable endonuclease 4 (285 aa).

His-69, His-109, Glu-145, Asp-179, His-182, His-216, Asp-229, His-231, and Glu-261 together coordinate Zn(2+).

This sequence belongs to the AP endonuclease 2 family. Requires Zn(2+) as cofactor.

The catalysed reaction is Endonucleolytic cleavage to 5'-phosphooligonucleotide end-products.. Its function is as follows. Endonuclease IV plays a role in DNA repair. It cleaves phosphodiester bonds at apurinic or apyrimidinic (AP) sites, generating a 3'-hydroxyl group and a 5'-terminal sugar phosphate. The protein is Probable endonuclease 4 of Yersinia pestis bv. Antiqua (strain Antiqua).